The following is an 889-amino-acid chain: Mixed-linked glucan synthase 2 (889 aa).

The segment at 34-53 is disordered; it reads AGADGQNGRRSPVAKRVNDG. A run of 2 helical transmembrane segments spans residues 93-113 and 123-143; these read ILHP…AFFA and GVWL…SWVL. The active site involves Asp-213. The stretch at 265 to 293 forms a coiled coil; that stretch reads ELMSDHRRVRREYEEFKVRIDSLSSTIRQ. 2 residues coordinate substrate: Asp-411 and Asp-413. The active site involves Asp-579. 6 helical membrane-spanning segments follow: residues 655–675, 685–705, 723–743, 777–797, 811–831, and 842–862; these read TYPI…MWLI, FGEY…IGMF, FYMI…ALKL, LLIP…VAVG, LAVL…PFAL, and AVLF…YVAF.

This sequence belongs to the glycosyltransferase 2 family. Plant cellulose synthase-like F subfamily.

It localises to the golgi apparatus membrane. In terms of biological role, catalyzes both beta-1,3 and beta-1,4 glycosidic linkage on beta-D-glucan. Essential for (1,3;1,4)-beta-D-glucans synthesis in grasses and cereals (Poaceae). The mixed-linked glucans (which are not present in walls of dicotyledons or most other monocotyledonous plants) are particularly important constituents of the walls of the starchy endosperm and aleurone cells of cereal grains such as oats, wheat, rice and barley. They can account for up to 70% by weight of the wall. The chain is Mixed-linked glucan synthase 2 (CSLF2) from Oryza sativa subsp. japonica (Rice).